We begin with the raw amino-acid sequence, 275 residues long: uncharacterized protein (275 aa).

Positions 75-157 (AKELIKNRRL…AELKQAAEQG (83 aa)) form a coiled coil.

This is an uncharacterized protein from Bacillus subtilis (strain 168).